A 471-amino-acid polypeptide reads, in one-letter code: Mitochondrial distribution and morphology protein 10 (471 aa).

The segment at 313-338 (SNSAATPPRIKNSDSQVLSNNSTDSK) is disordered. A compositionally biased stretch (polar residues) spans 325–338 (SDSQVLSNNSTDSK).

Belongs to the MDM10 family. Component of the ER-mitochondria encounter structure (ERMES) or MDM complex, composed of MMM1, MDM10, MDM12 and MDM34. Associates with the mitochondrial outer membrane sorting assembly machinery SAM(core) complex.

The protein localises to the mitochondrion outer membrane. In terms of biological role, component of the ERMES/MDM complex, which serves as a molecular tether to connect the endoplasmic reticulum and mitochondria. Components of this complex are involved in the control of mitochondrial shape and protein biogenesis and may function in phospholipid exchange. MDM10 is involved in the late assembly steps of the general translocase of the mitochondrial outer membrane (TOM complex). Functions in the TOM40-specific route of the assembly of outer membrane beta-barrel proteins, including the association of TOM40 with the receptor TOM22 and small TOM proteins. Can associate with the SAM(core) complex as well as the MDM12-MMM1 complex, both involved in late steps of the major beta-barrel assembly pathway, that is responsible for biogenesis of all outer membrane beta-barrel proteins. May act as a switch that shuttles between both complexes and channels precursor proteins into the TOM40-specific pathway. Plays a role in mitochondrial morphology and in the inheritance of mitochondria. This chain is Mitochondrial distribution and morphology protein 10, found in Debaryomyces hansenii (strain ATCC 36239 / CBS 767 / BCRC 21394 / JCM 1990 / NBRC 0083 / IGC 2968) (Yeast).